Here is a 149-residue protein sequence, read N- to C-terminus: Secreted RxLR effector protein 3 (149 aa).

The signal sequence occupies residues 1-23 (MRASTILFVLGAAILAVIGVTTA). Positions 38 to 53 (RLLRSGSMEQEPDEER) match the RxLR-dEER motif.

The protein belongs to the RxLR effector family.

It localises to the secreted. It is found in the host nucleus. Its subcellular location is the host cytoplasm. Functionally, secreted effector that completely suppresses the host cell death induced by cell death-inducing proteins. This is Secreted RxLR effector protein 3 from Plasmopara viticola (Downy mildew of grapevine).